A 664-amino-acid chain; its full sequence is Probable L-type lectin-domain containing receptor kinase V.3 (664 aa).

Residues 1 to 26 (MSMSCKINWLMVLVIIALSNLESSLG) form the signal peptide. Residues 27 to 278 (RLVFEGSAGL…YPKAESQVKL (252 aa)) lie on the Extracellular side of the membrane. Residues 28–250 (LVFEGSAGLM…AIHYMWMWYV (223 aa)) are legume-lectin like. Asparagine 69, asparagine 116, asparagine 122, asparagine 174, and asparagine 197 each carry an N-linked (GlcNAc...) asparagine glycan. Residues 279–299 (IVLVTFLTLALFVALAASALI) traverse the membrane as a helical segment. The Cytoplasmic portion of the chain corresponds to 300–664 (VFFYKRHKKL…LPSGRPRLFL (365 aa)). A Protein kinase domain is found at 335–617 (NGFKQLLGEG…GVSELPDNLL (283 aa)). ATP contacts are provided by residues 341–349 (LGEGGFGPV) and lysine 364. Residue aspartate 461 is the Proton acceptor of the active site.

It in the C-terminal section; belongs to the protein kinase superfamily. Ser/Thr protein kinase family. The protein in the N-terminal section; belongs to the leguminous lectin family.

It is found in the cell membrane. It carries out the reaction L-seryl-[protein] + ATP = O-phospho-L-seryl-[protein] + ADP + H(+). It catalyses the reaction L-threonyl-[protein] + ATP = O-phospho-L-threonyl-[protein] + ADP + H(+). The chain is Probable L-type lectin-domain containing receptor kinase V.3 (LECRK53) from Arabidopsis thaliana (Mouse-ear cress).